Consider the following 399-residue polypeptide: Tetracycline resistance protein, class A (399 aa).

The next 12 membrane-spanning stretches (helical) occupy residues 7–29 (LIVILSTVALDAVGIGLIMPVLP), 44–66 (HYGILLALYALMQFACAPVLGAL), 73–95 (RPVLLVSLAGAAVDYAIMATAPF), 99–121 (LYIGRIVAGITGATGAVAGAYIA), 133–155 (FGFMSACFGFGMVAGPVLGGLMG), 160–182 (HAPFFAAAALNGLNFLTGCFLLP), 203–225 (FRWARGMTVVAALMAVFFIMQLV), 245–267 (ATTIGISLAAFGILHSLAQAMIT), 279–298 (ALMLGMIADGTGYILLAFAT), 302–324 (MAFPIMVLLASGGIGMPALQAML), 336–358 (LQGSLAALTSLTSIVGPLLFTAI), and 368–390 (GWAWIAGAALYLLCLPALRRGLW).

It belongs to the major facilitator superfamily. TCR/Tet family.

It is found in the cell inner membrane. Functionally, resistance to tetracycline by an active tetracycline efflux. This is an energy-dependent process that decreases the accumulation of the antibiotic in whole cells. This protein functions as a metal-tetracycline/H(+) antiporter. This is Tetracycline resistance protein, class A (tetA) from Escherichia coli.